A 477-amino-acid chain; its full sequence is Aspartyl/glutamyl-tRNA(Asn/Gln) amidotransferase subunit B (477 aa).

The protein belongs to the GatB/GatE family. GatB subfamily. In terms of assembly, heterotrimer of A, B and C subunits.

The catalysed reaction is L-glutamyl-tRNA(Gln) + L-glutamine + ATP + H2O = L-glutaminyl-tRNA(Gln) + L-glutamate + ADP + phosphate + H(+). The enzyme catalyses L-aspartyl-tRNA(Asn) + L-glutamine + ATP + H2O = L-asparaginyl-tRNA(Asn) + L-glutamate + ADP + phosphate + 2 H(+). Its function is as follows. Allows the formation of correctly charged Asn-tRNA(Asn) or Gln-tRNA(Gln) through the transamidation of misacylated Asp-tRNA(Asn) or Glu-tRNA(Gln) in organisms which lack either or both of asparaginyl-tRNA or glutaminyl-tRNA synthetases. The reaction takes place in the presence of glutamine and ATP through an activated phospho-Asp-tRNA(Asn) or phospho-Glu-tRNA(Gln). The polypeptide is Aspartyl/glutamyl-tRNA(Asn/Gln) amidotransferase subunit B (Sulfurovum sp. (strain NBC37-1)).